A 94-amino-acid chain; its full sequence is Large ribosomal subunit protein bL25 (94 aa).

Belongs to the bacterial ribosomal protein bL25 family. As to quaternary structure, part of the 50S ribosomal subunit; part of the 5S rRNA/L5/L18/L25 subcomplex. Contacts the 5S rRNA. Binds to the 5S rRNA independently of L5 and L18.

This is one of the proteins that binds to the 5S RNA in the ribosome where it forms part of the central protuberance. The polypeptide is Large ribosomal subunit protein bL25 (Pectobacterium carotovorum subsp. carotovorum (strain PC1)).